The sequence spans 150 residues: Macrodomain Ter protein (150 aa).

This sequence belongs to the MatP family. As to quaternary structure, homodimer.

The protein localises to the cytoplasm. Functionally, required for spatial organization of the terminus region of the chromosome (Ter macrodomain) during the cell cycle. Prevents early segregation of duplicated Ter macrodomains during cell division. Binds specifically to matS, which is a 13 bp signature motif repeated within the Ter macrodomain. This Shigella boydii serotype 18 (strain CDC 3083-94 / BS512) protein is Macrodomain Ter protein.